The primary structure comprises 224 residues: tRNA (guanine-N(7)-)-methyltransferase (224 aa).

Glutamate 54, glutamate 79, glutamate 106, and aspartate 129 together coordinate S-adenosyl-L-methionine. Aspartate 129 is an active-site residue. Substrate-binding residues include lysine 133 and aspartate 165.

Belongs to the class I-like SAM-binding methyltransferase superfamily. TrmB family.

It catalyses the reaction guanosine(46) in tRNA + S-adenosyl-L-methionine = N(7)-methylguanosine(46) in tRNA + S-adenosyl-L-homocysteine. It participates in tRNA modification; N(7)-methylguanine-tRNA biosynthesis. Its function is as follows. Catalyzes the formation of N(7)-methylguanine at position 46 (m7G46) in tRNA. The polypeptide is tRNA (guanine-N(7)-)-methyltransferase (Chlamydia muridarum (strain MoPn / Nigg)).